The sequence spans 38 residues: Large ribosomal subunit protein bL36 (38 aa).

The protein belongs to the bacterial ribosomal protein bL36 family.

The protein is Large ribosomal subunit protein bL36 of Roseiflexus sp. (strain RS-1).